Consider the following 276-residue polypeptide: Octanoyltransferase LipM (276 aa).

One can recognise a BPL/LPL catalytic domain in the interval 31–246; sequence GLIPPVIRFY…GFAKSLQIEL (216 aa). Catalysis depends on cysteine 148, which acts as the Acyl-thioester intermediate.

Belongs to the octanoyltransferase LipM family. Monomer.

It catalyses the reaction octanoyl-[ACP] + L-lysyl-[protein] = N(6)-octanoyl-L-lysyl-[protein] + holo-[ACP] + H(+). It functions in the pathway protein modification; protein lipoylation via endogenous pathway; protein N(6)-(lipoyl)lysine from octanoyl-[acyl-carrier-protein]. Catalyzes the transfer of endogenously produced octanoic acid from octanoyl-acyl-carrier-protein onto the lipoyl domain of GcvH, an intermediate carrier during protein lipoylation. The chain is Octanoyltransferase LipM from Lysinibacillus sphaericus (strain C3-41).